Here is a 213-residue protein sequence, read N- to C-terminus: Ras-related protein Rab-4A (213 aa).

Residues Gly18, Thr19, Gly20, Lys21, Ser22, Cys23, Ser37, His39, and Thr40 each contribute to the GTP site. Ser22 contributes to the Mg(2+) binding site. A Switch 1 motif is present at residues 39 to 44; the sequence is HTIGVE. Residues Thr40 and Asp63 each contribute to the Mg(2+) site. Residues 65–74 carry the Switch 2 motif; the sequence is AGQERFRSVT. Positions 66, 121, 122, 124, 152, and 153 each coordinate GTP. 2 S-geranylgeranyl cysteine lipidation sites follow: Cys211 and Cys213. At Cys213 the chain carries Cysteine methyl ester.

The protein belongs to the small GTPase superfamily. Rab family. The cofactor is Mg(2+).

It localises to the membrane. Its subcellular location is the cytoplasm. The protein localises to the early endosome membrane. The protein resides in the recycling endosome membrane. The enzyme catalyses GTP + H2O = GDP + phosphate + H(+). Regulated by guanine nucleotide exchange factors (GEFs) which promote the exchange of bound GDP for free GTP. Regulated by GTPase activating proteins (GAPs) which increase the GTP hydrolysis activity. Inhibited by GDP dissociation inhibitors (GDIs). The small GTPases Rab are key regulators of intracellular membrane trafficking, from the formation of transport vesicles to their fusion with membranes. Rabs cycle between an inactive GDP-bound form and an active GTP-bound form that is able to recruit to membranes different sets of downstream effectors directly responsible for vesicle formation, movement, tethering and fusion. RAB4A is involved in protein transport. Also plays a role in vesicular traffic. Mediates VEGFR2 endosomal trafficking to enhance VEGFR2 signaling. Acts as a regulator of platelet alpha-granule release during activation and aggregation of platelets. The chain is Ras-related protein Rab-4A (rab4a) from Danio rerio (Zebrafish).